The chain runs to 222 residues: Leucyl/phenylalanyl-tRNA--protein transferase (222 aa).

The protein belongs to the L/F-transferase family.

The protein localises to the cytoplasm. The enzyme catalyses N-terminal L-lysyl-[protein] + L-leucyl-tRNA(Leu) = N-terminal L-leucyl-L-lysyl-[protein] + tRNA(Leu) + H(+). It catalyses the reaction N-terminal L-arginyl-[protein] + L-leucyl-tRNA(Leu) = N-terminal L-leucyl-L-arginyl-[protein] + tRNA(Leu) + H(+). It carries out the reaction L-phenylalanyl-tRNA(Phe) + an N-terminal L-alpha-aminoacyl-[protein] = an N-terminal L-phenylalanyl-L-alpha-aminoacyl-[protein] + tRNA(Phe). Functionally, functions in the N-end rule pathway of protein degradation where it conjugates Leu, Phe and, less efficiently, Met from aminoacyl-tRNAs to the N-termini of proteins containing an N-terminal arginine or lysine. This Legionella pneumophila (strain Corby) protein is Leucyl/phenylalanyl-tRNA--protein transferase.